The chain runs to 102 residues: Small ribosomal subunit protein uS10 (102 aa).

It belongs to the universal ribosomal protein uS10 family. As to quaternary structure, part of the 30S ribosomal subunit.

Involved in the binding of tRNA to the ribosomes. This chain is Small ribosomal subunit protein uS10, found in Staphylococcus aureus (strain Mu3 / ATCC 700698).